We begin with the raw amino-acid sequence, 913 residues long: Trafficking kinesin-binding protein 2 (913 aa).

Over residues 11-21 the composition is skewed to polar residues; it reads SQTGEENLMSS. The segment at 11 to 31 is disordered; that stretch reads SQTGEENLMSSNHRDSESITD. Residues 48–353 form the HAP1 N-terminal domain; that stretch reads EEQLPQYKLR…QEEIKELRNK (306 aa). Residues 134–355 are a coiled coil; the sequence is QALLKRNHVL…EIKELRNKAG (222 aa). The interval 359-507 is interaction with HGS; that stretch reads HLCFSQAYGV…KQFFAEEWER (149 aa). Positions 442-478 are disordered; the sequence is ESGVQQTEDKTLPNQGSSTEVPGNSHPRDPPGLPEDS. Residues 453-463 show a composition bias toward polar residues; the sequence is LPNQGSSTEVP. Residues 502 to 519 adopt a coiled-coil conformation; that stretch reads AEEWERKLQILAEQEEEV. Composition is skewed to low complexity over residues 688-704 and 780-789; these read SSGFPSLSCGSSAGSAS and PSQSPCSSPV. 2 disordered regions span residues 688-707 and 769-790; these read SSGFPSLSCGSSAGSASNTA and ALATPSTPPNSPSQSPCSSPVP.

The protein belongs to the milton family. Interacts with RHOT1/Miro-1 and RHOT2/Miro-2. Interacts with GABA-A receptor and O-GlcNAc transferase. Interacts with HGS. In terms of processing, O-glycosylated. In terms of tissue distribution, present in heart and brain (at protein level).

The protein localises to the cytoplasm. The protein resides in the early endosome. Its subcellular location is the mitochondrion. May regulate endosome-to-lysosome trafficking of membrane cargo, including EGFR. This Rattus norvegicus (Rat) protein is Trafficking kinesin-binding protein 2 (Trak2).